Here is a 228-residue protein sequence, read N- to C-terminus: Tungstate uptake system permease protein TupB (228 aa).

The next 5 helical transmembrane spans lie at 25–45 (IIFL…AVSI), 65–85 (VLYS…AIGL), 102–122 (AMII…TYSL), 144–164 (VIIL…VTTF), and 203–223 (MAIA…AVIY). An ABC transmembrane type-1 domain is found at 26–222 (IFLSVFVSST…MISFAINAVI (197 aa)).

It belongs to the binding-protein-dependent transport system permease family. The complex is composed of two ATP-binding proteins (TupC), two transmembrane proteins (TupB) and a solute-binding protein (TupA).

It localises to the cell membrane. Part of an ABC transporter complex involved in tungstate uptake. Probably responsible for the translocation of the substrate across the membrane. This Peptoclostridium acidaminophilum (Eubacterium acidaminophilum) protein is Tungstate uptake system permease protein TupB.